Reading from the N-terminus, the 362-residue chain is MKASLRLRLDQLCDRHEELTALLADAEVISDNKRFRKLSREHSDLTEITEVWGKYRQAEEDIETAEMMKSDPDFKDMAEEEIQANKALLEELESQLNILMIPKDPNDSNAAYLEIRAGTGGDEAAIFSGDLFRMYSKYAESQGWRIEVLSENEGEHGGFKEVICRVDGDGVYGRLKFESGAHRVQRVPATESQGRVHTSACTVAILPEIDVDTNVEINPADLRIDTYRASGAGGQHINKTDSAVRITHIPTGTVVECQEERSQHKNKAKAMALLVSRLENAKRAAADAATSEMRRDLVGSGDRSERIRTYNYPQGRMTDHRINLTLYKLDAIMEGDLTELLDSLHREYQADQLAMLAQENGG.

The residue at position 235 (Gln235) is an N5-methylglutamine.

It belongs to the prokaryotic/mitochondrial release factor family. In terms of processing, methylated by PrmC. Methylation increases the termination efficiency of RF1.

It localises to the cytoplasm. Peptide chain release factor 1 directs the termination of translation in response to the peptide chain termination codons UAG and UAA. In Acinetobacter baumannii (strain ACICU), this protein is Peptide chain release factor 1.